A 136-amino-acid polypeptide reads, in one-letter code: Small ribosomal subunit protein uS9 (136 aa).

Positions 96-136 (LSPDNRKPLKTEGHLSRDPRAKERRKYGLKKARKAPQFSKR) are disordered. A compositionally biased stretch (basic and acidic residues) spans 98–116 (PDNRKPLKTEGHLSRDPRA). Basic residues predominate over residues 117–136 (KERRKYGLKKARKAPQFSKR).

It belongs to the universal ribosomal protein uS9 family.

This is Small ribosomal subunit protein uS9 from Prochlorococcus marinus (strain MIT 9515).